The primary structure comprises 297 residues: Probable endonuclease 4 (297 aa).

A disordered region spans residues 1-21; the sequence is MPEIGAHVSAAGGPQRAPERG. 9 residues coordinate Zn(2+): His-67, His-107, Glu-145, Asp-179, His-182, His-216, Asp-229, His-231, and Glu-261.

It belongs to the AP endonuclease 2 family. Zn(2+) serves as cofactor.

It carries out the reaction Endonucleolytic cleavage to 5'-phosphooligonucleotide end-products.. Endonuclease IV plays a role in DNA repair. It cleaves phosphodiester bonds at apurinic or apyrimidinic (AP) sites, generating a 3'-hydroxyl group and a 5'-terminal sugar phosphate. The polypeptide is Probable endonuclease 4 (Halorhodospira halophila (strain DSM 244 / SL1) (Ectothiorhodospira halophila (strain DSM 244 / SL1))).